The primary structure comprises 242 residues: Probable ergothioneine transport ATP-binding protein EgtUA (242 aa).

Residues 2–236 (IEYKNVALRY…PATDFVADLF (235 aa)) enclose the ABC transporter domain. 34–41 (GPSGSGKT) contributes to the ATP binding site.

The protein belongs to the ABC transporter superfamily. In terms of assembly, the complex is probably composed of at least an ATP-binding protein (EgtUA) and a transmembrane protein (EgtUBC).

The protein localises to the cell inner membrane. It catalyses the reaction ergothioneine(out) + ATP + H2O = ergothioneine(in) + ADP + phosphate + H(+). Its function is as follows. Part of an ABC transporter complex EgtU required for the uptake of ergothioneine (EGT), a natural low-molecular weight (LMW) thiol antioxidant. Probably responsible for energy coupling to the transport system. The sequence is that of Probable ergothioneine transport ATP-binding protein EgtUA from Streptococcus pneumoniae serotype 2 (strain D39 / NCTC 7466).